Here is a 58-residue protein sequence, read N- to C-terminus: Small ribosomal subunit protein bS21 (58 aa).

The span at 32 to 42 (VRKREHYEKPS) shows a compositional bias: basic and acidic residues. A disordered region spans residues 32–58 (VRKREHYEKPSVKKKKKSEAARKRKFK). Positions 43–58 (VKKKKKSEAARKRKFK) are enriched in basic residues.

Belongs to the bacterial ribosomal protein bS21 family.

The protein is Small ribosomal subunit protein bS21 of Clostridium botulinum (strain Okra / Type B1).